Here is a 550-residue protein sequence, read N- to C-terminus: Transcription factor 7-like 1-C (550 aa).

Residues 1-11 (MPQLNSGGGDE) show a composition bias toward gly residues. Residues 1–60 (MPQLNSGGGDELGANDELIRFKDEGEQEEKSPGEGSAEDLADVKSSLVNESENHSSDSDS) form an interaction with CTNNB1-A region. Disordered regions lie at residues 1-76 (MPQL…EKPR), 182-206 (GTPP…HPSE), and 390-473 (WSAR…SLTT). Basic and acidic residues-rich tracts occupy residues 17–32 (ELIR…EKSP) and 51–76 (SENH…EKPR). The segment at 108 to 311 (LGGITCPMVP…SPNLSRKSNV (204 aa)) is interaction with AES and TLE4-A. Positions 323–391 (IKKPLNAFML…LHSQLYPSWS (69 aa)) form a DNA-binding region, HMG box. Residues 406–415 (KQSPEMENYT) show a composition bias toward basic and acidic residues. Positions 407 to 550 (QSPEMENYTK…PLSLVTRSSD (144 aa)) are interaction with CTBP-B. The segment covering 444–463 (SPATPSAALASPAAPAATHS) has biased composition (low complexity). Residues 464 to 473 (EQAQPLSLTT) show a composition bias toward polar residues.

It belongs to the TCF/LEF family. As to quaternary structure, interacts with csnk1e, ctnnb1-A, ctbp-B, dact1-A and gsk3b. May interact with ase and tle4-A. Post-translationally, phosphorylated. Phosphorylation by csnk1e promotes binding to ctnnb1-A while phosphorylation by gsk3b may reverse this effect.

The protein resides in the nucleus. Participates in the Wnt signaling pathway. Binds to DNA and acts as a repressor in the absence of ctnnb1-A and possibly ctnnb1-B, and as an activator in the presence of these proteins. Required early in development for the establishment of the dorsal body axis in response to maternal Wnt signaling. This chain is Transcription factor 7-like 1-C (tcf7l1-c), found in Xenopus laevis (African clawed frog).